The sequence spans 194 residues: Fibroblast growth factor 7 (194 aa).

The signal sequence occupies residues Met1–Asp31. N-linked (GlcNAc...) asparagine glycosylation is present at Asn45.

It belongs to the heparin-binding growth factors family. As to quaternary structure, interacts with FGFBP1. Interacts with FGFR2. Affinity between fibroblast growth factors (FGFs) and their receptors is increased by heparan sulfate glycosaminoglycans that function as coreceptors.

It is found in the secreted. Functionally, plays an important role in the regulation of embryonic development, cell proliferation and cell differentiation. Required for normal branching morphogenesis. Growth factor active on keratinocytes. Possible major paracrine effector of normal epithelial cell proliferation. The polypeptide is Fibroblast growth factor 7 (FGF7) (Sus scrofa (Pig)).